We begin with the raw amino-acid sequence, 568 residues long: Envelope glycoprotein E (568 aa).

The signal sequence occupies residues 1 to 20 (MMPATLAGLALAVTVATMFA). Residues 21-422 (QRVDSTTIHH…GGGPGNSKRR (402 aa)) are Virion surface-facing. N88, N179, and N248 each carry an N-linked (GlcNAc...) asparagine; by host glycan. C271 and C280 are disulfide-bonded. The helical transmembrane segment at 423–443 (AAVLGAAVWIALTLLILGGLG) threads the bilayer. At 444 to 568 (AYVAVNKKCL…ANKTFPSQRY (125 aa)) the chain is on the intravirion side. The short motif at 465–468 (KPTL) is the Internalization motif element. The tract at residues 470–534 (THAHTYTSLP…SRRNSFGPTL (65 aa)) is disordered. Residues 482 to 497 (GDLSLEQDAEDEDEDE) are acidic. The span at 486–500 (LEQDAEDEDEDEEEL) shows a compositional bias: acidic residues. Positions 515–526 (KSSRSPSRRSSR) are enriched in basic residues.

The protein belongs to the alphaherpesvirinae glycoprotein E family. In terms of assembly, interacts with gI. Post-translationally, phosphorylated on serines within the acidic cluster. Phosphorylation determines whether endocytosed viral gE traffics to the trans-Golgi network or recycles to the cell membrane.

The protein resides in the virion membrane. It localises to the host cell membrane. It is found in the host cell junction. Its subcellular location is the host Golgi apparatus membrane. The protein localises to the host endosome membrane. In terms of biological role, in epithelial cells, the heterodimer gE/gI is required for the cell-to-cell spread of the virus, by sorting nascent virions to cell junctions. Once the virus reaches the cell junctions, virus particles can spread to adjacent cells extremely rapidly through interactions with cellular receptors that accumulate at these junctions. Implicated in basolateral spread in polarized cells. In neuronal cells, gE/gI is essential for the anterograde spread of the infection throughout the host nervous system. Together with US9, the heterodimer gE/gI is involved in the sorting and transport of viral structural components toward axon tips. The chain is Envelope glycoprotein E (US8) from Psittacid herpesvirus 1 (isolate Amazon parrot/-/97-0001/1997) (PsHV-1).